We begin with the raw amino-acid sequence, 145 residues long: 3-dehydroquinate dehydratase (145 aa).

Y23 (proton acceptor) is an active-site residue. Residues N75, H81, and D88 each contribute to the substrate site. Catalysis depends on H101, which acts as the Proton donor. Substrate contacts are provided by residues 102-103 (LS) and R112.

It belongs to the type-II 3-dehydroquinase family. Homododecamer.

It catalyses the reaction 3-dehydroquinate = 3-dehydroshikimate + H2O. It participates in metabolic intermediate biosynthesis; chorismate biosynthesis; chorismate from D-erythrose 4-phosphate and phosphoenolpyruvate: step 3/7. Its function is as follows. Catalyzes a trans-dehydration via an enolate intermediate. This Legionella pneumophila (strain Paris) protein is 3-dehydroquinate dehydratase.